The following is a 1835-amino-acid chain: Protein TIC 214 (1835 aa).

Helical transmembrane passes span Val-25 to Leu-45, Phe-64 to Leu-84, Pro-87 to His-107, Leu-124 to Leu-144, Val-172 to Ile-192, and Ile-221 to Ile-241. The segment covering Leu-246–Ser-258 has biased composition (basic and acidic residues). Disordered regions lie at residues Leu-246–Gln-304, Glu-735–Glu-759, and Asn-1535–Ser-1578. Over residues Ala-259–Thr-268 the composition is skewed to acidic residues. Residues Pro-1553–Ile-1569 are compositionally biased toward basic and acidic residues.

It belongs to the TIC214 family. Part of the Tic complex.

Its subcellular location is the plastid. It is found in the chloroplast inner membrane. In terms of biological role, involved in protein precursor import into chloroplasts. May be part of an intermediate translocation complex acting as a protein-conducting channel at the inner envelope. The polypeptide is Protein TIC 214 (Liriodendron tulipifera (Tuliptree)).